The sequence spans 549 residues: NAC domain-containing protein 53 (549 aa).

The region spanning 9-159 (LAPGFRFHPT…AFVLCRIFQK (151 aa)) is the NAC domain. Residues 108–165 (VGMKKTLVYHKGRAPRGERTNWVMHEYRLVDQDLDKTGVHQDAFVLCRIFQKSGSGPK) mediate DNA binding. The segment covering 395–416 (LEKEETSRSKHVVEEKEKDEAS) has biased composition (basic and acidic residues). Residues 395–418 (LEKEETSRSKHVVEEKEKDEASCS) form a disordered region. The helical transmembrane segment at 526–546 (LIFMCFWVLLLSVSFKVSILV) threads the bilayer.

In terms of tissue distribution, expressed in roots, rosette leaves, cauline leaves, shoot apex and stems.

Its subcellular location is the endoplasmic reticulum membrane. The protein resides in the nucleus. In terms of biological role, transcriptional activator activated by proteolytic cleavage through regulated intramembrane proteolysis (RIP). Promotes reactive oxygen species (ROS) production during drought-induced leaf senescence. In response to abscisic acid (ABA)-mediated drought stress signals, binds directly to the promoters of RBOHC and RBOHE genes, encoding ROS biosynthetic enzymes, resulting in ROS accumulation and triggering leaf senescence via programmed cell death (PCD). ROS-induced leaf senescence sustains plant survival under drought conditions. Involved in heat stress response. Modulates PCD through a ROS-mediated positive feedback control under heat stress conditions. This may provide an adaptation strategy for plant survival under extreme heat stress conditions. Acts as a repressor in preventing anther dehiscence during stamen development by suppressing genes that participate in jasmonic acid (JA) biosynthesis, such as DAD1, AOS, AOC3, OPR3 and 4CLL5/OPCL1. This chain is NAC domain-containing protein 53, found in Arabidopsis thaliana (Mouse-ear cress).